The sequence spans 483 residues: Aspartyl/glutamyl-tRNA(Asn/Gln) amidotransferase subunit B (483 aa).

Belongs to the GatB/GatE family. GatB subfamily. As to quaternary structure, heterotrimer of A, B and C subunits.

It carries out the reaction L-glutamyl-tRNA(Gln) + L-glutamine + ATP + H2O = L-glutaminyl-tRNA(Gln) + L-glutamate + ADP + phosphate + H(+). The catalysed reaction is L-aspartyl-tRNA(Asn) + L-glutamine + ATP + H2O = L-asparaginyl-tRNA(Asn) + L-glutamate + ADP + phosphate + 2 H(+). In terms of biological role, allows the formation of correctly charged Asn-tRNA(Asn) or Gln-tRNA(Gln) through the transamidation of misacylated Asp-tRNA(Asn) or Glu-tRNA(Gln) in organisms which lack either or both of asparaginyl-tRNA or glutaminyl-tRNA synthetases. The reaction takes place in the presence of glutamine and ATP through an activated phospho-Asp-tRNA(Asn) or phospho-Glu-tRNA(Gln). The chain is Aspartyl/glutamyl-tRNA(Asn/Gln) amidotransferase subunit B from Roseiflexus castenholzii (strain DSM 13941 / HLO8).